A 362-amino-acid chain; its full sequence is Glycyl-glycine endopeptidase ALE-1 (362 aa).

Positions 1-35 (MDTNRKFTLVKSLSIGLGTFLVGSVFLTVNDEASA) are cleaved as a signal peptide. The tract at residues 35 to 110 (ASTKVDAPKV…PAKADAPKVE (76 aa)) is disordered. The segment covering 40–110 (DAPKVEQEAP…PAKADAPKVE (71 aa)) has biased composition (basic and acidic residues). Zn(2+)-binding residues include His150 and Asp154. His231 is a catalytic residue. His233 is a Zn(2+) binding site. The region spanning 282–350 (SESASFTANT…YLPVRTWNES (69 aa)) is the SH3b domain.

Belongs to the peptidase M23B family. Zn(2+) serves as cofactor.

The protein localises to the secreted. It catalyses the reaction Hydrolysis of the -Gly-|-Gly- bond in the pentaglycine inter-peptide link joining staphylococcal cell wall peptidoglycans.. Its function is as follows. Lyses staphylococcal cells by hydrolyzing the polyglycine interpeptide bridges of the peptidoglycan. This chain is Glycyl-glycine endopeptidase ALE-1, found in Staphylococcus capitis.